The chain runs to 88 residues: Small ribosomal subunit protein uS15 (88 aa).

Belongs to the universal ribosomal protein uS15 family. Part of the 30S ribosomal subunit. Forms a bridge to the 50S subunit in the 70S ribosome, contacting the 23S rRNA.

One of the primary rRNA binding proteins, it binds directly to 16S rRNA where it helps nucleate assembly of the platform of the 30S subunit by binding and bridging several RNA helices of the 16S rRNA. Its function is as follows. Forms an intersubunit bridge (bridge B4) with the 23S rRNA of the 50S subunit in the ribosome. The polypeptide is Small ribosomal subunit protein uS15 (Albidiferax ferrireducens (strain ATCC BAA-621 / DSM 15236 / T118) (Rhodoferax ferrireducens)).